A 162-amino-acid polypeptide reads, in one-letter code: NADH-quinone oxidoreductase subunit I (162 aa).

4Fe-4S ferredoxin-type domains are found at residues 53–83 (LRRY…IDSA) and 93–122 (TRYD…ETHI). Cys-63, Cys-66, Cys-69, Cys-73, Cys-102, Cys-105, Cys-108, and Cys-112 together coordinate [4Fe-4S] cluster.

This sequence belongs to the complex I 23 kDa subunit family. As to quaternary structure, NDH-1 is composed of 14 different subunits. Subunits NuoA, H, J, K, L, M, N constitute the membrane sector of the complex. [4Fe-4S] cluster is required as a cofactor.

It localises to the cell inner membrane. The enzyme catalyses a quinone + NADH + 5 H(+)(in) = a quinol + NAD(+) + 4 H(+)(out). In terms of biological role, NDH-1 shuttles electrons from NADH, via FMN and iron-sulfur (Fe-S) centers, to quinones in the respiratory chain. The immediate electron acceptor for the enzyme in this species is believed to be ubiquinone. Couples the redox reaction to proton translocation (for every two electrons transferred, four hydrogen ions are translocated across the cytoplasmic membrane), and thus conserves the redox energy in a proton gradient. The polypeptide is NADH-quinone oxidoreductase subunit I (Xanthomonas axonopodis pv. citri (strain 306)).